The primary structure comprises 410 residues: Multifunctional CCA protein (410 aa).

2 residues coordinate ATP: glycine 8 and arginine 11. Residues glycine 8 and arginine 11 each coordinate CTP. The Mg(2+) site is built by aspartate 21 and aspartate 23. Positions 91, 137, and 140 each coordinate ATP. 3 residues coordinate CTP: arginine 91, arginine 137, and arginine 140. Positions 228-329 (TGVHVLSVLQ…LELLQSFDVY (102 aa)) constitute an HD domain.

This sequence belongs to the tRNA nucleotidyltransferase/poly(A) polymerase family. Bacterial CCA-adding enzyme type 1 subfamily. Monomer. Can also form homodimers and oligomers. Mg(2+) is required as a cofactor. The cofactor is Ni(2+).

The catalysed reaction is a tRNA precursor + 2 CTP + ATP = a tRNA with a 3' CCA end + 3 diphosphate. The enzyme catalyses a tRNA with a 3' CCA end + 2 CTP + ATP = a tRNA with a 3' CCACCA end + 3 diphosphate. In terms of biological role, catalyzes the addition and repair of the essential 3'-terminal CCA sequence in tRNAs without using a nucleic acid template. Adds these three nucleotides in the order of C, C, and A to the tRNA nucleotide-73, using CTP and ATP as substrates and producing inorganic pyrophosphate. tRNA 3'-terminal CCA addition is required both for tRNA processing and repair. Also involved in tRNA surveillance by mediating tandem CCA addition to generate a CCACCA at the 3' terminus of unstable tRNAs. While stable tRNAs receive only 3'-terminal CCA, unstable tRNAs are marked with CCACCA and rapidly degraded. The sequence is that of Multifunctional CCA protein from Pseudomonas paraeruginosa (strain DSM 24068 / PA7) (Pseudomonas aeruginosa (strain PA7)).